Reading from the N-terminus, the 255-residue chain is EEF1A lysine methyltransferase 4 (255 aa).

S-adenosyl-L-methionine is bound by residues W26 and Y30. Y39 is modified (phosphotyrosine). S-adenosyl-L-methionine contacts are provided by residues W41, G66, 88-89 (DY), 113-114 (DV), and K130. A Required for methyltransferase activity motif is present at residues 129 to 134 (EKGTLD).

This sequence belongs to the methyltransferase superfamily.

It carries out the reaction L-lysyl-[protein] + S-adenosyl-L-methionine = N(6)-methyl-L-lysyl-[protein] + S-adenosyl-L-homocysteine + H(+). The catalysed reaction is N(6)-methyl-L-lysyl-[protein] + S-adenosyl-L-methionine = N(6),N(6)-dimethyl-L-lysyl-[protein] + S-adenosyl-L-homocysteine + H(+). It catalyses the reaction N(6),N(6)-dimethyl-L-lysyl-[protein] + S-adenosyl-L-methionine = N(6),N(6),N(6)-trimethyl-L-lysyl-[protein] + S-adenosyl-L-homocysteine + H(+). Protein-lysine methyltransferase that efficiently catalyzes three successive methylations on 'Lys-36' in eukaryotic translation elongation factor 1 alpha (EEF1A1 or EEF1A2). This chain is EEF1A lysine methyltransferase 4, found in Bos taurus (Bovine).